The sequence spans 159 residues: CASP-like protein 1C1 (159 aa).

The Cytoplasmic portion of the chain corresponds to 1–6 (MAKIKR). Residues 7–27 (IITTLVRLLVLGAALSATIVM) traverse the membrane as a helical segment. The Extracellular segment spans residues 28–50 (VTSHDSAEVLNLSFDAKYTNARA). Asn38 is a glycosylation site (N-linked (GlcNAc...) asparagine). Residues 51-73 (FVYFAITNAIASGYSFIALFLSF) form a helical membrane-spanning segment. The Cytoplasmic segment spans residues 74-86 (STPLWHLVFLLDV). Residues 87-107 (FMTLLLTSSISVALAIADVGK) form a helical membrane-spanning segment. At 108–130 (KGNSHAGWLPVCGQVPEFCDHVT) the chain is on the extracellular side. The helical transmembrane segment at 131-151 (GALIAGFSAAVLYLVLLLFSI) threads the bilayer. Topologically, residues 152 to 159 (HAVLNPKP) are cytoplasmic.

The protein belongs to the Casparian strip membrane proteins (CASP) family. As to quaternary structure, homodimer and heterodimers.

Its subcellular location is the cell membrane. This chain is CASP-like protein 1C1, found in Vitis vinifera (Grape).